A 394-amino-acid chain; its full sequence is L-lactate 2-monooxygenase (394 aa).

The region spanning 19 to 394 (VAPTLPMSYA…LTIDALRPTR (376 aa)) is the FMN hydroxy acid dehydrogenase domain. Tyr45 serves as a coordination point for a 2-oxocarboxylate. Residues 98–100 (PIG), Ser129, and Gln151 each bind FMN. Tyr153 contributes to the a 2-oxocarboxylate binding site. Thr179 serves as a coordination point for FMN. Arg188 serves as a coordination point for a 2-oxocarboxylate. Lys267 contributes to the FMN binding site. The active-site Proton acceptor is His291. Residue Arg294 participates in a 2-oxocarboxylate binding. FMN is bound by residues 321–325 (DSGIR) and Arg345.

This sequence belongs to the FMN-dependent alpha-hydroxy acid dehydrogenase family. In terms of assembly, homotetramer. FMN serves as cofactor.

It carries out the reaction (S)-lactate + O2 = acetate + CO2 + H2O. Catalyzes the oxidative decarboxylation of (S)-lactate (L-lactate) to acetate and carbon dioxide. Its physiological role remains unknown. This chain is L-lactate 2-monooxygenase, found in Mycolicibacterium smegmatis (Mycobacterium smegmatis).